A 297-amino-acid chain; its full sequence is Large ribosomal subunit protein uL18 (297 aa).

G2 is subject to N-acetylglycine. An N6-acetyllysine mark is found at K5 and K48. S185 is subject to Phosphoserine. At K220 the chain carries N6-acetyllysine; alternate. Residue K220 forms a Glycyl lysine isopeptide (Lys-Gly) (interchain with G-Cter in SUMO1); alternate linkage. K220 is covalently cross-linked (Glycyl lysine isopeptide (Lys-Gly) (interchain with G-Cter in SUMO2); alternate). T232 carries the phosphothreonine modification. A disordered region spans residues 252–297; it reads VYEKKPKKEVKKKRWNRPKMSLAQKKDRVAQKKASFLRAQERAAES. Basic residues predominate over residues 258 to 268; sequence KKEVKKKRWNR. S272 is subject to Phosphoserine.

Belongs to the universal ribosomal protein uL18 family. As to quaternary structure, component of the large ribosomal subunit (LSU). Part of the 5S RNP complex, which is a LSU subcomplex composed of the 5S RNA, RPL5 and RPL11. Component of a hexameric 5S RNP precursor complex, composed of 5S RNA, RRS1, RPF2/BXDC1, RPL5, RPL11 and HEATR3; this complex acts as a precursor for ribosome assembly. Interacts with NVL in an ATP-dependent manner. Interacts with RRP1B. Interacts with IPO5, IPO7 and KPNB1; these interactions may be involved in RPL5 nuclear import for the assembly of ribosomal subunits.

It localises to the cytoplasm. Its subcellular location is the nucleus. It is found in the nucleolus. Its function is as follows. Component of the ribosome, a large ribonucleoprotein complex responsible for the synthesis of proteins in the cell. The small ribosomal subunit (SSU) binds messenger RNAs (mRNAs) and translates the encoded message by selecting cognate aminoacyl-transfer RNA (tRNA) molecules. The large subunit (LSU) contains the ribosomal catalytic site termed the peptidyl transferase center (PTC), which catalyzes the formation of peptide bonds, thereby polymerizing the amino acids delivered by tRNAs into a polypeptide chain. The nascent polypeptides leave the ribosome through a tunnel in the LSU and interact with protein factors that function in enzymatic processing, targeting, and the membrane insertion of nascent chains at the exit of the ribosomal tunnel. As part of the 5S RNP/5S ribonucleoprotein particle it is an essential component of the LSU, required for its formation and the maturation of rRNAs. It also couples ribosome biogenesis to p53/TP53 activation. As part of the 5S RNP it accumulates in the nucleoplasm and inhibits MDM2, when ribosome biogenesis is perturbed, mediating the stabilization and the activation of TP53. The protein is Large ribosomal subunit protein uL18 (RPL5) of Bos taurus (Bovine).